We begin with the raw amino-acid sequence, 227 residues long: DNA repair protein RecO (227 aa).

This sequence belongs to the RecO family.

Involved in DNA repair and RecF pathway recombination. The polypeptide is DNA repair protein RecO (Pseudomonas putida (strain ATCC 700007 / DSM 6899 / JCM 31910 / BCRC 17059 / LMG 24140 / F1)).